We begin with the raw amino-acid sequence, 74 residues long: Defensin J1-2 (74 aa).

Residues 1–27 form the signal peptide; the sequence is MAGFSKVIATIFLMMMLVFATGMVAEA. Cystine bridges form between C30–C74, C41–C61, C47–C68, and C51–C70.

This sequence belongs to the DEFL family. In terms of assembly, monomer. In terms of tissue distribution, expressed in flowers and in young fruits.

It localises to the secreted. Its function is as follows. Plant defense peptide with antifungal activity against F.oxysporum and B.cinerea. This Capsicum annuum (Capsicum pepper) protein is Defensin J1-2.